A 416-amino-acid chain; its full sequence is Gamma-glutamyl phosphate reductase (416 aa).

This sequence belongs to the gamma-glutamyl phosphate reductase family.

Its subcellular location is the cytoplasm. The enzyme catalyses L-glutamate 5-semialdehyde + phosphate + NADP(+) = L-glutamyl 5-phosphate + NADPH + H(+). The protein operates within amino-acid biosynthesis; L-proline biosynthesis; L-glutamate 5-semialdehyde from L-glutamate: step 2/2. Functionally, catalyzes the NADPH-dependent reduction of L-glutamate 5-phosphate into L-glutamate 5-semialdehyde and phosphate. The product spontaneously undergoes cyclization to form 1-pyrroline-5-carboxylate. The sequence is that of Gamma-glutamyl phosphate reductase from Streptococcus pyogenes serotype M49 (strain NZ131).